Reading from the N-terminus, the 215-residue chain is Protein transport protein sec22 (215 aa).

Residues 1–194 (MVKSTTVTRL…RVNLEALWRQ (194 aa)) are Cytoplasmic-facing. Positions 9 to 118 (RLDGLPLAAS…YAFVQFDTFM (110 aa)) constitute a Longin domain. One can recognise a v-SNARE coiled-coil homology domain in the interval 133 to 193 (NLDKLNTELK…RRVNLEALWR (61 aa)). Residues 195–215 (YGPVSIIALLFLIFVYWRFFA) traverse the membrane as a helical; Anchor for type IV membrane protein segment.

Belongs to the synaptobrevin family. As to quaternary structure, component of two distinct SNARE complexes consisting of sed5, bos1, bet1 and sec22 or ufe1, use1, sec20 and sec22. Ykt6 can probably replace sec22 as subunit of either complex.

It localises to the membrane. Its subcellular location is the endoplasmic reticulum membrane. The protein resides in the golgi apparatus membrane. Functionally, nonessential SNARE involved in targeting and fusion of ER-derived transport vesicles with the Golgi complex as well as Golgi-derived retrograde transport vesicles with the ER. This is Protein transport protein sec22 (sec22) from Schizosaccharomyces pombe (strain 972 / ATCC 24843) (Fission yeast).